We begin with the raw amino-acid sequence, 246 residues long: Neurotrophic factor BDNF precursor form (246 aa).

An N-terminal signal peptide occupies residues 1-18 (MTILFLTMVISYFSCMKA). The propeptide occupies 19–127 (APMKEASVRG…AANMSMRVRR (109 aa)). Asn-120 carries an N-linked (GlcNAc...) asparagine glycan. Intrachain disulfides connect Cys-140-Cys-207, Cys-185-Cys-236, and Cys-195-Cys-238.

The protein belongs to the NGF-beta family.

The protein resides in the secreted. Functionally, important signaling molecule that activates signaling cascades downstream of NTRK2. During development, promotes the survival and differentiation of selected neuronal populations of the peripheral and central nervous systems. Participates in axonal growth, pathfinding and in the modulation of dendritic growth and morphology. Major regulator of synaptic transmission and plasticity at adult synapses in many regions of the CNS. The versatility of BDNF is emphasized by its contribution to a range of adaptive neuronal responses including long-term potentiation (LTP), long-term depression (LTD), certain forms of short-term synaptic plasticity, as well as homeostatic regulation of intrinsic neuronal excitability. The polypeptide is Neurotrophic factor BDNF precursor form (BDNF) (Gallus gallus (Chicken)).